A 156-amino-acid chain; its full sequence is Small ribosomal subunit protein uS7 (156 aa).

The protein belongs to the universal ribosomal protein uS7 family. In terms of assembly, part of the 30S ribosomal subunit. Contacts proteins S9 and S11.

In terms of biological role, one of the primary rRNA binding proteins, it binds directly to 16S rRNA where it nucleates assembly of the head domain of the 30S subunit. Is located at the subunit interface close to the decoding center, probably blocks exit of the E-site tRNA. This Synechococcus sp. (strain CC9605) protein is Small ribosomal subunit protein uS7.